Here is a 241-residue protein sequence, read N- to C-terminus: 2-C-methyl-D-erythritol 4-phosphate cytidylyltransferase (241 aa).

The protein belongs to the IspD/TarI cytidylyltransferase family. IspD subfamily.

The enzyme catalyses 2-C-methyl-D-erythritol 4-phosphate + CTP + H(+) = 4-CDP-2-C-methyl-D-erythritol + diphosphate. Its pathway is isoprenoid biosynthesis; isopentenyl diphosphate biosynthesis via DXP pathway; isopentenyl diphosphate from 1-deoxy-D-xylulose 5-phosphate: step 2/6. Its function is as follows. Catalyzes the formation of 4-diphosphocytidyl-2-C-methyl-D-erythritol from CTP and 2-C-methyl-D-erythritol 4-phosphate (MEP). The protein is 2-C-methyl-D-erythritol 4-phosphate cytidylyltransferase of Pseudoalteromonas translucida (strain TAC 125).